A 256-amino-acid chain; its full sequence is uncharacterized protein (256 aa).

An HTH cro/C1-type domain is found at 10–64 (IRALRESRDWSLADLAAATGVSTMGLSYLERGARKPHKSTVQKVENGLGLPPGTY). The segment at residues 21-40 (LADLAAATGVSTMGLSYLER) is a DNA-binding region (H-T-H motif).

This is an uncharacterized protein from Mycobacterium bovis (strain ATCC BAA-935 / AF2122/97).